A 1053-amino-acid polypeptide reads, in one-letter code: MAGNDWINSYLEAILDVGPGLDDKKSSLLLRERGRFSPTRYFVEEVITGFDETDLHRSWIRAQATRSPQRRNTRLENMCWRIWNLARQKKQLEGEQAQWMAKRRQERERGRREAVADMSEDLSEGEKGDIVADMSSHGESTRGRLPRISSVETMEAWVSQQRGKKLYIVLISLHGLIRGENMELGRDSDTGGQVKYVVELARALGSMPGVYRVDLLTRQVSSPEVDWSYGEPTELAPISTDGLMTEMGESSGAYIIRIPFGPREKYIPKEQLWPYIPEFVDGALNHIIQMSKVLGEQIGSGYPVWPVAIHGHYADAGDSAALLSGALNVPMLFTGHSLGRDKLEQLLAQGRKSKDEINSTYKIMRRIEAEELTLDASEIVITSTRQEIDEQWRLYDGFDPILERKLRARIKRNVSCYGRFMPRMAVIPPGMEFHHIVPHEGDMDGETEGSEDGKTPDPPIWAEIMRFFSNPRKPMILALARPDPKKNLTTLVKAFGECRPLRDLANLTLIMGNRDNIDEMSSTNSALLLSILKMIDKYDLYGQVAYPKHHKQSDVPDIYRLAAKTKGVFINPAFIEPFGLTLIEAAAYGLPMVATKNGGPVDIHRVLDNGLLVDPHDQQAIADALLKLVADKQLWAKCRANGLKNIHLFSWPEHCKTYLSRIASCKPRQPRWLRSIDDDDENSETDSPSDSLRDIHDISLNLRFSLDGEKNDNKENADNTLDPEVRRSKLENAVLSLSKGALKSTSKSWSSDKADQNPGAGKFPAIRRRRHIFVIAVDCDASSGLSGSVKKIFEAVEKERAEGSIGFILATSFNISEVQSFLLSEGMNPTDFDAYICNSGGDLYYSSFHSEQNPFVVDLYYHSHIEYRWGGEGLRKTLVRWAASIIDKNGENGDHIVVEDEDNSADYCYTFKVCKPGTVPPSKELRKVMRIQALRCHAVYCQNGSRINVIPVLASRSQALRYLYLRWGMDLSKLVVFVGESGDTDYEGLIGGLRKAVIMKGLCTNASSLIHGNRNYPLSDVLPFDSPNVIQADEECSSTEIRCLLEKLAVLKG.

Basic and acidic residues predominate over residues 103 to 115; sequence RRQERERGRREAV. Disordered regions lie at residues 103–127 and 673–693; these read RRQE…EGEK and LRSI…DSLR.

The protein belongs to the glycosyltransferase 1 family. Homodimer or homotetramer.

The catalysed reaction is beta-D-fructose 6-phosphate + UDP-alpha-D-glucose = sucrose 6(F)-phosphate + UDP + H(+). Its pathway is glycan biosynthesis; sucrose biosynthesis; sucrose from D-fructose 6-phosphate and UDP-alpha-D-glucose: step 1/2. Its activity is regulated as follows. Activity is regulated by phosphorylation and moderated by concentration of metabolites and light. Functionally, plays a role in photosynthetic sucrose synthesis by catalyzing the rate-limiting step of sucrose biosynthesis from UDP-glucose and fructose- 6-phosphate. Involved in the regulation of carbon partitioning in the leaves of plants. May regulate the synthesis of sucrose and therefore play a major role as a limiting factor in the export of photoassimilates out of the leaf. Plays a role for sucrose availability that is essential for plant growth and fiber elongation. In Solanum tuberosum (Potato), this protein is Probable sucrose-phosphate synthase (SPS).